A 387-amino-acid chain; its full sequence is 3-ketoacyl-CoA thiolase (387 aa).

The Acyl-thioester intermediate role is filled by cysteine 91. Residues histidine 343 and cysteine 373 each act as proton acceptor in the active site.

The protein belongs to the thiolase-like superfamily. Thiolase family. Heterotetramer of two alpha chains (FadB) and two beta chains (FadA).

It localises to the cytoplasm. The catalysed reaction is an acyl-CoA + acetyl-CoA = a 3-oxoacyl-CoA + CoA. Its pathway is lipid metabolism; fatty acid beta-oxidation. Catalyzes the final step of fatty acid oxidation in which acetyl-CoA is released and the CoA ester of a fatty acid two carbons shorter is formed. The protein is 3-ketoacyl-CoA thiolase of Vibrio vulnificus (strain YJ016).